The sequence spans 987 residues: VPS35 endosomal protein sorting factor-like (987 aa).

A compositionally biased stretch (low complexity) spans 1-23 (MAERQSASSPTPSSPPQQQQQTP). The interval 1–115 (MAERQSASSP…DPLNNPLEKK (115 aa)) is disordered. Over residues 43-63 (NGREVERHPLNSITKTEDTGK) the composition is skewed to basic and acidic residues. Positions 66 to 111 (QSSLSSNASSLQSAAAAASSSTATTDIDPLNNNNNNNTDIDPLNNP) are enriched in low complexity.

This sequence belongs to the VPS35L family. In terms of assembly, component of the heterotrimeric retriever complex.

It localises to the endosome. Its function is as follows. Acts as a component of the retriever complex. The retriever complex is a heterotrimeric complex related to retromer cargo-selective complex (CSC) and essential for retromer-independent retrieval and recycling of numerous cargos. This is VPS35 endosomal protein sorting factor-like from Dictyostelium discoideum (Social amoeba).